The primary structure comprises 122 residues: Large ribosomal subunit protein eL18 (122 aa).

The protein belongs to the eukaryotic ribosomal protein eL18 family.

This chain is Large ribosomal subunit protein eL18, found in Thermoplasma volcanium (strain ATCC 51530 / DSM 4299 / JCM 9571 / NBRC 15438 / GSS1).